We begin with the raw amino-acid sequence, 132 residues long: Small ribosomal subunit protein uS8 (132 aa).

This sequence belongs to the universal ribosomal protein uS8 family. Part of the 30S ribosomal subunit. Contacts proteins S5 and S12.

In terms of biological role, one of the primary rRNA binding proteins, it binds directly to 16S rRNA central domain where it helps coordinate assembly of the platform of the 30S subunit. The polypeptide is Small ribosomal subunit protein uS8 (Desulfitobacterium hafniense (strain DSM 10664 / DCB-2)).